Reading from the N-terminus, the 213-residue chain is Orotate phosphoribosyltransferase (213 aa).

Lysine 26 contributes to the 5-phospho-alpha-D-ribose 1-diphosphate binding site. Residue 34-35 participates in orotate binding; it reads FF. 5-phospho-alpha-D-ribose 1-diphosphate contacts are provided by residues 72 to 73, arginine 99, lysine 100, lysine 103, histidine 105, and 124 to 132; these read YK and DDVITAGTA. Threonine 128 and arginine 156 together coordinate orotate.

Belongs to the purine/pyrimidine phosphoribosyltransferase family. PyrE subfamily. Homodimer. Mg(2+) is required as a cofactor.

The catalysed reaction is orotidine 5'-phosphate + diphosphate = orotate + 5-phospho-alpha-D-ribose 1-diphosphate. It participates in pyrimidine metabolism; UMP biosynthesis via de novo pathway; UMP from orotate: step 1/2. Functionally, catalyzes the transfer of a ribosyl phosphate group from 5-phosphoribose 1-diphosphate to orotate, leading to the formation of orotidine monophosphate (OMP). In Haemophilus influenzae (strain ATCC 51907 / DSM 11121 / KW20 / Rd), this protein is Orotate phosphoribosyltransferase.